A 423-amino-acid polypeptide reads, in one-letter code: UDP-N-acetylglucosamine 1-carboxyvinyltransferase (423 aa).

22-23 (KN) lines the phosphoenolpyruvate pocket. UDP-N-acetyl-alpha-D-glucosamine is bound at residue R93. Residue C117 is the Proton donor of the active site. Position 117 is a 2-(S-cysteinyl)pyruvic acid O-phosphothioketal (C117). Residues D305 and I327 each coordinate UDP-N-acetyl-alpha-D-glucosamine.

It belongs to the EPSP synthase family. MurA subfamily.

It localises to the cytoplasm. It carries out the reaction phosphoenolpyruvate + UDP-N-acetyl-alpha-D-glucosamine = UDP-N-acetyl-3-O-(1-carboxyvinyl)-alpha-D-glucosamine + phosphate. The protein operates within cell wall biogenesis; peptidoglycan biosynthesis. Its function is as follows. Cell wall formation. Adds enolpyruvyl to UDP-N-acetylglucosamine. This chain is UDP-N-acetylglucosamine 1-carboxyvinyltransferase, found in Acidithiobacillus ferrooxidans (strain ATCC 23270 / DSM 14882 / CIP 104768 / NCIMB 8455) (Ferrobacillus ferrooxidans (strain ATCC 23270)).